Consider the following 1403-residue polypeptide: Eukaryotic translation initiation factor 4 gamma (1403 aa).

Composition is skewed to polar residues over residues 1-11, 19-39, and 50-60; these read MSSKPPSNTPK, ASSQSNKSNSTKASENNTATA, and EPTNTSRANAQ. 4 disordered regions span residues 1–381, 439–464, 488–774, and 861–1003; these read MSSK…GSTP, SRSGSQVSDQVVESPNSSTLSPRNGF, VVVP…KRDL, and AFSD…EALL. Ser83 carries the phosphoserine modification. Positions 109-137 are enriched in polar residues; sequence DNTSKPSANSSAERTSSQHQKPETSSQIG. 2 stretches are compositionally biased toward low complexity: residues 190 to 208 and 231 to 248; these read SGVSSYSSKSQSVNSSVTS and PRPTTSASNTNTSPANGA. The span at 249–269 shows a compositional bias: polar residues; that stretch reads PTNKPSTDINTTDPATQTTQV. Positions 270 to 291 are enriched in low complexity; sequence SASNSPALSGSSTPSNTSSRSN. The span at 298-308 shows a compositional bias: basic and acidic residues; the sequence is FSEKRHYDRYG. Positions 325–334 are enriched in low complexity; sequence NYNNSGNNRN. Composition is skewed to polar residues over residues 346–381, 439–460, and 493–508; these read RNYNNQGAYPTYMSNGRSANQSPRNNPQNVNNGSTP, SRSGSQVSDQVVESPNSSTLSP, and KNASSPNPSETNSRAE. Phosphoserine occurs at positions 452, 455, 456, and 459. The segment covering 537–714 has biased composition (basic and acidic residues); that stretch reads IQEKAEAEAK…GKREADKNPE (178 aa). Over residues 720 to 737 the composition is skewed to polar residues; the sequence is PLASSEANVDTSKQTNAT. Basic and acidic residues predominate over residues 741-754; the sequence is VVDKTKVEKLKASE. Low complexity predominate over residues 757-768; it reads STSSLSSPSHST. Ser866 and Ser882 each carry phosphoserine. Low complexity predominate over residues 868 to 886; that stretch reads RGMYSSSRQSSRSGSNTHS. Position 884 is a phosphothreonine (Thr884). Phosphoserine occurs at positions 886, 911, 919, and 921. The residue at position 923 (Tyr923) is a Phosphotyrosine. The segment covering 986-995 has biased composition (basic and acidic residues); the sequence is KLTEKPAETK. One can recognise an MIF4G domain in the interval 1009–1245; that stretch reads QRKVKGSLNK…MDVMDSRKNG (237 aa). Positions 1266–1403 are disordered; that stretch reads AERKKALAES…QKDSNSKTSS (138 aa). The segment covering 1284 to 1295 has biased composition (basic and acidic residues); it reads HGRDMNRGDSRM. Polar residues-rich tracts occupy residues 1302 to 1313, 1328 to 1341, and 1348 to 1358; these read PPFSSSDWSNNK, SGTQGSHGPTSLSS, and VSRTPSRQNSA. Ser1333 carries the phosphoserine modification. The segment covering 1383-1403 has biased composition (basic and acidic residues); the sequence is LEEHDHDNDGGQKDSNSKTSS.

Belongs to the eukaryotic initiation factor 4G family.

It is found in the cytoplasm. The protein localises to the perinuclear region. In terms of biological role, component of the protein complex eIF4F, which is involved in the recognition of the mRNA cap, ATP-dependent unwinding of 5'-terminal secondary structure and recruitment of mRNA to the ribosome. The sequence is that of Eukaryotic translation initiation factor 4 gamma (tif471) from Schizosaccharomyces pombe (strain 972 / ATCC 24843) (Fission yeast).